We begin with the raw amino-acid sequence, 353 residues long: Survival factor 2 (353 aa).

This sequence belongs to the SVF1 family.

The protein localises to the cytoplasm. The protein resides in the nucleus. This chain is Survival factor 2 (svf2), found in Schizosaccharomyces pombe (strain 972 / ATCC 24843) (Fission yeast).